The following is an 87-amino-acid chain: Large ribosomal subunit protein bL28 (87 aa).

This sequence belongs to the bacterial ribosomal protein bL28 family.

This is Large ribosomal subunit protein bL28 from Akkermansia muciniphila (strain ATCC BAA-835 / DSM 22959 / JCM 33894 / BCRC 81048 / CCUG 64013 / CIP 107961 / Muc).